The primary structure comprises 288 residues: Aquaporin PIP2-4 (288 aa).

Residues 1–24 form a disordered region; the sequence is MAKDIEASGPEAGEFSAKDYTDPP. Helical transmembrane passes span 42–62 and 79–99; these read AVIA…ATVI and CGGV…FILV. The NPA 1 signature appears at 111 to 113; the sequence is NPA. Transmembrane regions (helical) follow at residues 130-150, 172-192, and 206-226; these read LLYI…VKGF, GTGL…VFSA, and VLAP…TIPI. Positions 232-234 match the NPA 2 motif; the sequence is NPA. A helical transmembrane segment spans residues 254–274; it reads IFWVGPLIGAAIAAAYHQYVL.

Belongs to the MIP/aquaporin (TC 1.A.8) family. PIP (TC 1.A.8.11) subfamily. Homomers. May interact with PIP1-2 to form heteromers. Expressed in the root growing zone at 5-6 mm from the root tip.

It is found in the cell membrane. Functionally, water channel required to facilitate the transport of water across cell membrane. Active as homomers. Increased activity when heteromerization with PIP1-2. In Zea mays (Maize), this protein is Aquaporin PIP2-4 (PIP2-4).